The chain runs to 129 residues: Small ribosomal subunit protein uS9 (129 aa).

A compositionally biased stretch (basic and acidic residues) spans 104–113 (TRDSRVVERK). The tract at residues 104–129 (TRDSRVVERKKPGKRKARRSRQFSKR) is disordered. Over residues 114-129 (KPGKRKARRSRQFSKR) the composition is skewed to basic residues.

The protein belongs to the universal ribosomal protein uS9 family.

This Sulfurimonas denitrificans (strain ATCC 33889 / DSM 1251) (Thiomicrospira denitrificans (strain ATCC 33889 / DSM 1251)) protein is Small ribosomal subunit protein uS9.